A 459-amino-acid polypeptide reads, in one-letter code: V-type ATP synthase beta chain (459 aa).

This sequence belongs to the ATPase alpha/beta chains family.

Functionally, produces ATP from ADP in the presence of a proton gradient across the membrane. The V-type beta chain is a regulatory subunit. This Thermoanaerobacter sp. (strain X514) protein is V-type ATP synthase beta chain.